Here is a 286-residue protein sequence, read N- to C-terminus: Thiazole synthase (286 aa).

K122 serves as the catalytic Schiff-base intermediate with DXP. Residues G183, 209-210, and 231-232 contribute to the 1-deoxy-D-xylulose 5-phosphate site; these read AG and NT.

This sequence belongs to the ThiG family. In terms of assembly, homotetramer. Forms heterodimers with either ThiH or ThiS.

Its subcellular location is the cytoplasm. The enzyme catalyses [ThiS sulfur-carrier protein]-C-terminal-Gly-aminoethanethioate + 2-iminoacetate + 1-deoxy-D-xylulose 5-phosphate = [ThiS sulfur-carrier protein]-C-terminal Gly-Gly + 2-[(2R,5Z)-2-carboxy-4-methylthiazol-5(2H)-ylidene]ethyl phosphate + 2 H2O + H(+). The protein operates within cofactor biosynthesis; thiamine diphosphate biosynthesis. Its function is as follows. Catalyzes the rearrangement of 1-deoxy-D-xylulose 5-phosphate (DXP) to produce the thiazole phosphate moiety of thiamine. Sulfur is provided by the thiocarboxylate moiety of the carrier protein ThiS. In vitro, sulfur can be provided by H(2)S. This is Thiazole synthase from Synechococcus elongatus (strain ATCC 33912 / PCC 7942 / FACHB-805) (Anacystis nidulans R2).